Here is a 397-residue protein sequence, read N- to C-terminus: Phosphoglycerate kinase (397 aa).

Substrate is bound by residues 25–27, Arg-41, 64–67, Arg-118, and Arg-151; these read DLN and HLGR. ATP-binding positions include Lys-202, Glu-324, and 350–353; that span reads GGDT.

It belongs to the phosphoglycerate kinase family. In terms of assembly, monomer.

The protein resides in the cytoplasm. It carries out the reaction (2R)-3-phosphoglycerate + ATP = (2R)-3-phospho-glyceroyl phosphate + ADP. Its pathway is carbohydrate degradation; glycolysis; pyruvate from D-glyceraldehyde 3-phosphate: step 2/5. This is Phosphoglycerate kinase from Paracidovorax citrulli (strain AAC00-1) (Acidovorax citrulli).